Consider the following 752-residue polypeptide: Protein WEAK CHLOROPLAST MOVEMENT UNDER BLUE LIGHT-like 2 (752 aa).

Ser143 is subject to Phosphoserine. Coiled coils occupy residues 186 to 557 and 596 to 651; these read ERRK…SRAS and ELSK…KEAM. Residues 476 to 495 form a disordered region; that stretch reads KHDLSETRQRNREDTREEKC. Over residues 653–675 the composition is skewed to basic and acidic residues; sequence KVEKARDGKVGMDHELRKWRSDN. The segment at 653–733 is disordered; sequence KVEKARDGKV…ETETKKKKKR (81 aa). Positions 690 to 723 are enriched in polar residues; that stretch reads KSKSALHQPTTFTFGEQASSSNVTPQASSSNVTP.

Belongs to the WEB family.

The sequence is that of Protein WEAK CHLOROPLAST MOVEMENT UNDER BLUE LIGHT-like 2 (WEL2) from Arabidopsis thaliana (Mouse-ear cress).